We begin with the raw amino-acid sequence, 306 residues long: B- and T-lymphocyte attenuator (306 aa).

A signal peptide spans 1–29; the sequence is MKTVPAMLGTPRLFREFFILHLGLWSILC. Residues 30–183 are Extracellular-facing; sequence EKATKRNDEE…ERPGRTWLLY (154 aa). One can recognise an Ig-like V-type domain in the interval 37-139; it reads DEECPVQLTI…SQVINSHSVT (103 aa). Cystine bridges form between Cys-40/Cys-69, Cys-64/Cys-124, and Cys-78/Cys-85. Residues Asn-74, Asn-81, Asn-101, Asn-119, Asn-148, and Asn-165 are each glycosylated (N-linked (GlcNAc...) asparagine). The chain crosses the membrane as a helical span at residues 184–204; sequence TLLPLGALLLLLACVCLLCFL. Residues 205–306 lie on the Cytoplasmic side of the membrane; it reads KRIQGKEKKP…TEYASICVRS (102 aa).

In terms of assembly, interacts with tyrosine phosphatases PTPN6/SHP-1 and PTPN11/SHP-2. Interacts with TNFRSF14/HVEM (via cysteine-rich domain 1). Post-translationally, phosphorylated on Tyr residues by TNFRSF14 and by antigen receptors cross-linking, both inducing association with PTPN6 and PTPN11. N-glycosylated. As to expression, expressed in splenic T- and B-cells as well as lymph node tissues but very weakly in somatic tissues. Also expressed in macrophages, NK cells and dendritic cells. A polymorphic tissue distribution between several strains is seen.

Its subcellular location is the cell membrane. Its function is as follows. Inhibitory receptor on lymphocytes that negatively regulates antigen receptor signaling via PTPN6/SHP-1 and PTPN11/SHP-2. May interact in cis (on the same cell) or in trans (on other cells) with TNFRSF14. In cis interactions, appears to play an immune regulatory role inhibiting in trans interactions in naive T cells to maintain a resting state. In trans interactions, can predominate during adaptive immune response to provide survival signals to effector T cells. In Mus musculus (Mouse), this protein is B- and T-lymphocyte attenuator.